A 1033-amino-acid polypeptide reads, in one-letter code: Calcium-transporting ATPase 3, plasma membrane-type (1033 aa).

Residues 1-180 (MHSGVNGCCP…FVWEALEDTT (180 aa)) lie on the Cytoplasmic side of the membrane. A run of 2 helical transmembrane segments spans residues 181–201 (LIIL…TEGW) and 204–224 (GAHD…VTGT). The Cytoplasmic portion of the chain corresponds to 225 to 268 (SNYQQSLQFRDLDKEKRKILVQVTRNGLRQRVLIDDLLPGDAVH). 2 helical membrane passes run 269 to 289 (LAVG…SVLV) and 362 to 382 (IGKI…QGII). The Cytoplasmic portion of the chain corresponds to 383-405 (GQKYLDGLLLSWSGDDVLEILDH). The chain crosses the membrane as a helical span at residues 406–426 (FAVAVTIVVVAVPEGLPLAVT). Aspartate 461 functions as the 4-aspartylphosphate intermediate in the catalytic mechanism. Aspartate 762 and aspartate 766 together coordinate Mg(2+). The chain crosses the membrane as a helical span at residues 823 to 843 (FQLTVNVVALLVNFTSACFTG). Residues 844-846 (DAP) are Cytoplasmic-facing. The next 2 membrane-spanning stretches (helical) occupy residues 847–867 (LTAV…ALAL) and 928–948 (IVLN…NEIS). Over 949–965 (SREMEDINVLRGMAGNS) the chain is Cytoplasmic. The next 2 membrane-spanning stretches (helical) occupy residues 966 to 986 (IFLG…QFLG) and 999 to 1019 (WLIS…IKLI). At 1020–1033 (AVEPHEKADTRRTP) the chain is on the cytoplasmic side.

The protein belongs to the cation transport ATPase (P-type) (TC 3.A.3) family. Type IIB subfamily.

Its subcellular location is the membrane. The catalysed reaction is Ca(2+)(in) + ATP + H2O = Ca(2+)(out) + ADP + phosphate + H(+). Its activity is regulated as follows. Activated by calmodulin. This magnesium-dependent enzyme catalyzes the hydrolysis of ATP coupled with the translocation of calcium from the cytosol out of the cell, into the endoplasmic reticulum, or into organelles. In Oryza sativa subsp. japonica (Rice), this protein is Calcium-transporting ATPase 3, plasma membrane-type.